The following is a 253-amino-acid chain: Probable transcriptional regulatory protein RAF_ORF0717 (253 aa).

Residues 1 to 21 (MAGHSKFKNIQHRKGAQDKKR) are disordered.

The protein belongs to the TACO1 family.

Its subcellular location is the cytoplasm. This chain is Probable transcriptional regulatory protein RAF_ORF0717, found in Rickettsia africae (strain ESF-5).